The sequence spans 258 residues: MLAKRIIPCLDVRNGQVVKGVQFRNHEIIGDIVPLAQRYAQEGADELVFYDITASSDGRVVDKSWVSRVAEVIDIPFCVAGGIKSVEEAGQILSFGADKISINSPALADPELITRLADRYGVQCIVVGIDTWHDATTGRYHVNQYTGDEARTKVTTWETLDWVEEVQKRGAGEIVLNMMNQDGVRNGYDLHQLNLVRDVCNVPLIASGGAGTMEHFLDAFQTAHVDGALAASVFHKQIINIGELKQYLKQQGVEIRVC.

Residues aspartate 11 and aspartate 130 contribute to the active site.

The protein belongs to the HisA/HisF family. In terms of assembly, heterodimer of HisH and HisF.

The protein resides in the cytoplasm. The catalysed reaction is 5-[(5-phospho-1-deoxy-D-ribulos-1-ylimino)methylamino]-1-(5-phospho-beta-D-ribosyl)imidazole-4-carboxamide + L-glutamine = D-erythro-1-(imidazol-4-yl)glycerol 3-phosphate + 5-amino-1-(5-phospho-beta-D-ribosyl)imidazole-4-carboxamide + L-glutamate + H(+). It participates in amino-acid biosynthesis; L-histidine biosynthesis; L-histidine from 5-phospho-alpha-D-ribose 1-diphosphate: step 5/9. IGPS catalyzes the conversion of PRFAR and glutamine to IGP, AICAR and glutamate. The HisF subunit catalyzes the cyclization activity that produces IGP and AICAR from PRFAR using the ammonia provided by the HisH subunit. The polypeptide is Imidazole glycerol phosphate synthase subunit HisF (Pectobacterium carotovorum subsp. carotovorum (strain PC1)).